The sequence spans 71 residues: Sec-independent protein translocase protein TatA (71 aa).

A helical transmembrane segment spans residues 1 to 21 (MGSFSLLHWLVVLVIVLLVFG). A disordered region spans residues 43-71 (LREDDKPTDQLGSTSQSTASGPQQDHGKH). Positions 52–65 (QLGSTSQSTASGPQ) are enriched in polar residues.

Belongs to the TatA/E family. The Tat system comprises two distinct complexes: a TatABC complex, containing multiple copies of TatA, TatB and TatC subunits, and a separate TatA complex, containing only TatA subunits. Substrates initially bind to the TatABC complex, which probably triggers association of the separate TatA complex to form the active translocon.

Its subcellular location is the cell inner membrane. Part of the twin-arginine translocation (Tat) system that transports large folded proteins containing a characteristic twin-arginine motif in their signal peptide across membranes. TatA could form the protein-conducting channel of the Tat system. This chain is Sec-independent protein translocase protein TatA, found in Xylella fastidiosa (strain 9a5c).